The following is a 73-amino-acid chain: Putative ORF9c protein (73 aa).

The chain crosses the membrane as a helical span at residues alanine 47–leucine 67.

Its subcellular location is the membrane. May induce apoptosis in cardiomyocytes when overexpressed ex-vivo. This chain is Putative ORF9c protein, found in Homo sapiens (Human).